The chain runs to 135 residues: Large ribosomal subunit protein uL15 (135 aa).

The disordered stretch occupies residues 21 to 66 (VGRGQGSGMGKTATRGGKGQTARTGYKAKRGFEGGQQPLQRRLPKI).

The protein belongs to the universal ribosomal protein uL15 family. Part of the 50S ribosomal subunit.

Binds to the 23S rRNA. In Helicobacter pylori (strain HPAG1), this protein is Large ribosomal subunit protein uL15.